The primary structure comprises 132 residues: ATP synthase epsilon chain (132 aa).

The protein belongs to the ATPase epsilon chain family. In terms of assembly, F-type ATPases have 2 components, CF(1) - the catalytic core - and CF(0) - the membrane proton channel. CF(1) has five subunits: alpha(3), beta(3), gamma(1), delta(1), epsilon(1). CF(0) has three main subunits: a, b and c.

It is found in the cell inner membrane. Produces ATP from ADP in the presence of a proton gradient across the membrane. This chain is ATP synthase epsilon chain, found in Gloeobacter violaceus (strain ATCC 29082 / PCC 7421).